The primary structure comprises 172 residues: Cold-inducible RNA-binding protein (172 aa).

Residues 6–84 enclose the RRM domain; the sequence is GKLFVGGLSF…RQIRVDQAGK (79 aa). Positions 70 to 172 are disordered; that stretch reads KSVDGRQIRV…SYDSYATHNE (103 aa). Composition is skewed to gly residues over residues 93 to 105 and 114 to 137; these read YRGGSAGGRGFFR and FSRGGGDRGYGGGRFESRSGGYGG. Residues Ser-130, Ser-138, Ser-146, Ser-156, Ser-159, and Ser-163 each carry the phosphoserine modification. Residues 138-172 show a composition bias toward low complexity; that stretch reads SRDYYASRSQGGSYGYRSSGGSYRDSYDSYATHNE.

Interacts with EIF4G1. Associates with ribosomes. In terms of processing, methylated on arginine residues. Methylation of the RGG motifs is a prerequisite for recruitment into SGs. Post-translationally, phosphorylated by CK2, GSK3A and GSK3B. Phosphorylation by GSK3B increases RNA-binding activity to the TXN 3'-UTR transcript upon exposure to UV radiation. As to expression, ubiquitous.

It localises to the nucleus. It is found in the nucleoplasm. The protein localises to the cytoplasm. Its function is as follows. Cold-inducible mRNA binding protein that plays a protective role in the genotoxic stress response by stabilizing transcripts of genes involved in cell survival. Promotes assembly of stress granules (SGs), when overexpressed. Seems to play an essential role in cold-induced suppression of cell proliferation. Acts as a translational repressor. Acts as a translational activator. Binds specifically to the 3'-untranslated regions (3'-UTRs) of stress-responsive transcripts RPA2 and TXN. The sequence is that of Cold-inducible RNA-binding protein (Cirbp) from Mus musculus (Mouse).